The chain runs to 309 residues: Taste receptor type 2 member 46 (309 aa).

Position 1 (M1) is a topological domain, extracellular. Residues 2–22 traverse the membrane as a helical segment; sequence ITFLPIIFSILIVVTFVIGNF. The Cytoplasmic segment spans residues 23–46; sequence ANGFIALVNSIEWFKRQKISFADQ. Residues 47-67 form a helical membrane-spanning segment; the sequence is ILTALAVSRVGLLWVLVLNWY. At 68-86 the chain is on the extracellular side; sequence ATELNPAFNSIEVRITAYN. A helical membrane pass occupies residues 87–107; sequence VWAVINHFSNWLATSLSIFYL. The Cytoplasmic segment spans residues 108–126; sequence LKIANFSNLIFLHLKRRVK. The helical transmembrane segment at 127-147 threads the bilayer; sequence SVVLVILLGPLLFLVCHLFVI. At 148–178 the chain is on the extracellular side; it reads NMNQIIWTKEYEGNMTWKIKLRSAMYLSNTT. Residues N161 and N176 are each glycosylated (N-linked (GlcNAc...) asparagine). The helical transmembrane segment at 179–199 threads the bilayer; the sequence is VTILANLVPFTLTLISFLLLI. The Cytoplasmic portion of the chain corresponds to 200-229; it reads CSLCKHLKKMQLHGKGSQDPSMKVHIKALQ. Residues 230-250 traverse the membrane as a helical segment; it reads TVTSFLLLCAIYFLSIIMSVW. Residues 251–259 lie on the Extracellular side of the membrane; it reads SFESLENKP. A helical membrane pass occupies residues 260–280; sequence VFMFCEAIAFSYPSTHPFILI. The Cytoplasmic portion of the chain corresponds to 281–309; the sequence is WGNKKLKQTFLSVLWHVRYWVKGEKPSSS.

This sequence belongs to the G-protein coupled receptor T2R family. In terms of tissue distribution, expressed in subsets of taste receptor cells of the tongue and exclusively in gustducin-positive cells. Expressed on ciliated airway epithelium.

The protein resides in the membrane. It is found in the cell projection. Its subcellular location is the cilium membrane. Receptor that may play a role in the perception of bitterness and is gustducin-linked. May play a role in sensing the chemical composition of the gastrointestinal content. The activity of this receptor may stimulate alpha gustducin, mediate PLC-beta-2 activation and lead to the gating of TRPM5. In airway epithelial cells, binding of bitter compounds increases the intracellular calcium ion concentration and stimulates ciliary beat frequency. This Homo sapiens (Human) protein is Taste receptor type 2 member 46 (TAS2R46).